We begin with the raw amino-acid sequence, 167 residues long: Small ribosomal subunit protein uS5 (167 aa).

The 64-residue stretch at 12-75 (LQEKLIAVNR…EKARRSMVTI (64 aa)) folds into the S5 DRBM domain.

This sequence belongs to the universal ribosomal protein uS5 family. Part of the 30S ribosomal subunit. Contacts proteins S4 and S8.

With S4 and S12 plays an important role in translational accuracy. Functionally, located at the back of the 30S subunit body where it stabilizes the conformation of the head with respect to the body. The protein is Small ribosomal subunit protein uS5 of Vibrio cholerae serotype O1 (strain ATCC 39541 / Classical Ogawa 395 / O395).